We begin with the raw amino-acid sequence, 357 residues long: Putative F-box/kelch-repeat protein At5g38680 (357 aa).

In terms of domain architecture, F-box spans 14–61 (NSNPSLPDALIISCIARVSRLYYPILSFVSKSFRSLLASPELYKERSL). Kelch repeat units lie at residues 131–175 (NIYN…VLDG), 177–224 (IYVA…SKSL), 226–267 (IDEK…YCEI), and 268–313 (ENVL…GGKK).

The polypeptide is Putative F-box/kelch-repeat protein At5g38680 (Arabidopsis thaliana (Mouse-ear cress)).